Here is a 316-residue protein sequence, read N- to C-terminus: Metal tolerance protein 8 (316 aa).

Over 1 to 15 (MGPVRHILNERKSRK) the chain is Cytoplasmic. The helical transmembrane segment at 16–36 (IAAFLLINTAYMFVEFTSGFM) threads the bilayer. The Vacuolar segment spans residues 37–45 (SDSLGLISD). Residues 46–66 (ACHMLFDCAALAIGLYASYIA) traverse the membrane as a helical segment. Over 67–80 (RLPANGLYNYGRGR) the chain is Cytoplasmic. Residues 81–101 (FEVLSGYVNAVFLVLVGALIV) traverse the membrane as a helical segment. The Vacuolar portion of the chain corresponds to 102–116 (LESFERILEPREIST). A helical membrane pass occupies residues 117–137 (SSLLTVSIGGLVVNVIGLVFF). At 138–176 (HEEHHHAHGEAHSCNGGLQSSENHNKSRNRHHIDHNMEG) the chain is on the cytoplasmic side. Positions 147–166 (EAHSCNGGLQSSENHNKSRN) are disordered. A helical transmembrane segment spans residues 177–197 (IFLHVLADTMGSVGVVISTLL). Residues 198–202 (IKYKG) lie on the Vacuolar side of the membrane. Residues 203-223 (WLIADPICSVFISIMIVSSVL) traverse the membrane as a helical segment. Residues 224–316 (PLLRNSAEIL…LTIQIECVKR (93 aa)) lie on the Cytoplasmic side of the membrane.

It belongs to the cation diffusion facilitator (CDF) transporter (TC 2.A.4) family. SLC30A subfamily.

The protein localises to the vacuole membrane. Its function is as follows. Involved in sequestration of excess metal in the cytoplasm into vacuoles to maintain metal homeostasis. The sequence is that of Metal tolerance protein 8 (MTP8) from Oryza sativa subsp. japonica (Rice).